The following is a 674-amino-acid chain: DNA-directed RNA polymerase subunit beta' (674 aa).

Residues Cys69, Cys71, Cys87, and Cys90 each coordinate Zn(2+). Mg(2+) contacts are provided by Asp494, Asp496, and Asp498.

The protein belongs to the RNA polymerase beta' chain family. RpoC1 subfamily. As to quaternary structure, in plastids the minimal PEP RNA polymerase catalytic core is composed of four subunits: alpha, beta, beta', and beta''. When a (nuclear-encoded) sigma factor is associated with the core the holoenzyme is formed, which can initiate transcription. Mg(2+) is required as a cofactor. The cofactor is Zn(2+).

The protein resides in the plastid. The protein localises to the chloroplast. The enzyme catalyses RNA(n) + a ribonucleoside 5'-triphosphate = RNA(n+1) + diphosphate. In terms of biological role, DNA-dependent RNA polymerase catalyzes the transcription of DNA into RNA using the four ribonucleoside triphosphates as substrates. The polypeptide is DNA-directed RNA polymerase subunit beta' (Psilotum nudum (Whisk fern)).